Here is a 335-residue protein sequence, read N- to C-terminus: Protein-arginine N-acetylglucosaminyltransferase SseK3 (335 aa).

UDP-N-acetyl-alpha-D-glucosamine is bound by residues 51 to 53 and Tyr75; that span reads QWF. N-beta-linked (GlcNAc) arginine; by autocatalysis glycosylation is found at Arg153 and Arg184. Position 224-227 (224-227) interacts with UDP-N-acetyl-alpha-D-glucosamine; the sequence is YLDA. Positions 226–228 match the DXD motif motif; the sequence is DAD. Mn(2+) is bound at residue Asp228. Residue Glu258 is the Proton acceptor of the active site. Arg305 carries an N-beta-linked (GlcNAc) arginine; by autocatalysis glycan. Mn(2+) is bound by residues Asp325 and Ser327. UDP-N-acetyl-alpha-D-glucosamine is bound by residues Ser327 and 332-335; that span reads SSWR. Arg335 carries N-beta-linked (GlcNAc) arginine; by autocatalysis glycosylation.

The protein belongs to the glycosyltransferase NleB family. Interacts with host TRIM32; without mediating its GlcNAcylation. Mn(2+) is required as a cofactor. In terms of processing, auto-glycosylated: arginine GlcNAcylation is required for activity toward death domain-containing host target proteins.

Its subcellular location is the secreted. It is found in the host Golgi apparatus. It carries out the reaction L-arginyl-[protein] + UDP-N-acetyl-alpha-D-glucosamine = N(omega)-(N-acetyl-beta-D-glucosaminyl)-L-arginyl-[protein] + UDP + H(+). In terms of biological role, protein-arginine N-acetylglucosaminyltransferase effector that disrupts TNF signaling in infected cells, including NF-kappa-B signaling and apoptosis. Acts by catalyzing the transfer of a single N-acetylglucosamine (GlcNAc) to a conserved arginine residue in the death domain of host proteins such as TRADD, TNFRSF1A/TNFR1 and TNFRSF10B/TRAILR2: arginine GlcNAcylation prevents homotypic/heterotypic death domain interactions and assembly of the oligomeric TNF-alpha receptor complex, thereby disrupting TNF signaling. Also acts on host proteins without a death domain: catalyzes arginine GlcNAcylation of host small Rab GTPase (Rab1, Rab5 and Rab11), thereby preventing GTPase activity and leading to impaired host vesicular protein transport. Also mediates auto-GlcNAcylation, which is required for activity toward death domain-containing host target proteins. The chain is Protein-arginine N-acetylglucosaminyltransferase SseK3 from Salmonella typhimurium (strain SL1344).